The primary structure comprises 440 residues: uncharacterized protein (440 aa).

2 disordered regions span residues Cys-49 to Leu-81 and Leu-162 to Glu-295. Residues His-55 to Ser-80 are compositionally biased toward polar residues. A compositionally biased stretch (basic and acidic residues) spans Tyr-249 to Ser-266. The segment covering Ser-274 to Gly-284 has biased composition (low complexity).

It belongs to the tymoviridae protein p69 family.

This is an uncharacterized protein from Erysimum latent virus (ELV).